The following is a 280-amino-acid chain: Movement protein (280 aa).

A disordered region spans residues glutamate 248–serine 267. The span at glutamate 255–serine 267 shows a compositional bias: low complexity.

The protein belongs to the cucumovirus movement protein family.

The protein localises to the host cell junction. It is found in the host plasmodesma. Functionally, transports viral genome to neighboring plant cells directly through plasmosdesmata, without any budding. The movement protein allows efficient cell to cell propagation, by bypassing the host cell wall barrier. Acts by forming a tubular structure at the host plasmodesmata, enlarging it enough to allow free passage of virion capsids. The chain is Movement protein from Cucumis sativus (Cucumber).